Consider the following 219-residue polypeptide: Probable nicotinate-nucleotide adenylyltransferase (219 aa).

This sequence belongs to the NadD family.

It carries out the reaction nicotinate beta-D-ribonucleotide + ATP + H(+) = deamido-NAD(+) + diphosphate. Its pathway is cofactor biosynthesis; NAD(+) biosynthesis; deamido-NAD(+) from nicotinate D-ribonucleotide: step 1/1. Its function is as follows. Catalyzes the reversible adenylation of nicotinate mononucleotide (NaMN) to nicotinic acid adenine dinucleotide (NaAD). The chain is Probable nicotinate-nucleotide adenylyltransferase from Erythrobacter litoralis (strain HTCC2594).